The following is an 83-amino-acid chain: Sec-independent protein translocase protein TatA (83 aa).

A helical transmembrane segment spans residues 1-21 (MGSLSPWHWAILAVVVIVLFG). Residues 48 to 83 (NENKAEASIETPTPVQSQRVDPSAASGQDSTEARPA) form a disordered region. Residues 57–77 (ETPTPVQSQRVDPSAASGQDS) are compositionally biased toward polar residues.

The protein belongs to the TatA/E family. In terms of assembly, the Tat system comprises two distinct complexes: a TatABC complex, containing multiple copies of TatA, TatB and TatC subunits, and a separate TatA complex, containing only TatA subunits. Substrates initially bind to the TatABC complex, which probably triggers association of the separate TatA complex to form the active translocon.

The protein resides in the cell membrane. Part of the twin-arginine translocation (Tat) system that transports large folded proteins containing a characteristic twin-arginine motif in their signal peptide across membranes. TatA could form the protein-conducting channel of the Tat system. The chain is Sec-independent protein translocase protein TatA from Mycobacterium bovis (strain BCG / Pasteur 1173P2).